A 336-amino-acid chain; its full sequence is Formimidoylglutamase (336 aa).

H129, D160, H162, D164, D257, and D259 together coordinate Mn(2+).

Belongs to the arginase family. The cofactor is Mn(2+).

The catalysed reaction is N-formimidoyl-L-glutamate + H2O = formamide + L-glutamate. It functions in the pathway amino-acid degradation; L-histidine degradation into L-glutamate; L-glutamate from N-formimidoyl-L-glutamate (hydrolase route): step 1/1. Catalyzes the conversion of N-formimidoyl-L-glutamate to L-glutamate and formamide. In Vibrio vulnificus (strain CMCP6), this protein is Formimidoylglutamase.